Reading from the N-terminus, the 364-residue chain is 3-isopropylmalate dehydrogenase (364 aa).

79–92 (GPKWNNINETSRPE) is a binding site for NAD(+). Arg-100, Arg-110, Arg-139, and Asp-228 together coordinate substrate. Mg(2+)-binding residues include Asp-228, Asp-252, and Asp-256. 286 to 298 (GSAPDIAGKNIAN) provides a ligand contact to NAD(+).

Belongs to the isocitrate and isopropylmalate dehydrogenases family. LeuB type 1 subfamily. As to quaternary structure, homodimer. Mg(2+) serves as cofactor. The cofactor is Mn(2+).

Its subcellular location is the cytoplasm. It carries out the reaction (2R,3S)-3-isopropylmalate + NAD(+) = 4-methyl-2-oxopentanoate + CO2 + NADH. The protein operates within amino-acid biosynthesis; L-leucine biosynthesis; L-leucine from 3-methyl-2-oxobutanoate: step 3/4. In terms of biological role, catalyzes the oxidation of 3-carboxy-2-hydroxy-4-methylpentanoate (3-isopropylmalate) to 3-carboxy-4-methyl-2-oxopentanoate. The product decarboxylates to 4-methyl-2 oxopentanoate. This is 3-isopropylmalate dehydrogenase from Blochmanniella floridana.